The following is a 79-amino-acid chain: Small ribosomal subunit protein eS17 (79 aa).

This sequence belongs to the eukaryotic ribosomal protein eS17 family.

The protein is Small ribosomal subunit protein eS17 of Saccharolobus islandicus (strain Y.N.15.51 / Yellowstone #2) (Sulfolobus islandicus).